Reading from the N-terminus, the 98-residue chain is MPYIYMNITLAFVISLIGTLMYRSHLMSSLLCLEGMMLSLFTLNALLSLNMNFTLSTTVPLILLVFAACEAAVGLALLVMISNTYGLDYVQNLNLLQC.

The next 3 membrane-spanning stretches (helical) occupy residues 1–21, 29–49, and 61–81; these read MPYIYMNITLAFVISLIGTLM, SLLCLEGMMLSLFTLNALLSL, and LILLVFAACEAAVGLALLVMI.

It belongs to the complex I subunit 4L family. As to quaternary structure, core subunit of respiratory chain NADH dehydrogenase (Complex I) which is composed of 45 different subunits.

It localises to the mitochondrion inner membrane. The enzyme catalyses a ubiquinone + NADH + 5 H(+)(in) = a ubiquinol + NAD(+) + 4 H(+)(out). In terms of biological role, core subunit of the mitochondrial membrane respiratory chain NADH dehydrogenase (Complex I) which catalyzes electron transfer from NADH through the respiratory chain, using ubiquinone as an electron acceptor. Part of the enzyme membrane arm which is embedded in the lipid bilayer and involved in proton translocation. The sequence is that of NADH-ubiquinone oxidoreductase chain 4L (MT-ND4L) from Loxodonta africana (African elephant).